The chain runs to 443 residues: 3-phosphoshikimate 1-carboxyvinyltransferase (443 aa).

Positions 1 to 22 (MSHASRPTPLEARGSTPLTGRV) are disordered. 3 residues coordinate 3-phosphoshikimate: Lys-28, Ser-29, and Arg-33. A phosphoenolpyruvate-binding site is contributed by Lys-28. Phosphoenolpyruvate is bound by residues Gly-101 and Arg-129. 3-phosphoshikimate contacts are provided by Ser-174, Gln-176, Asp-326, and Lys-353. Gln-176 serves as a coordination point for phosphoenolpyruvate. Asp-326 (proton acceptor) is an active-site residue. Phosphoenolpyruvate is bound by residues Arg-357 and Arg-400.

This sequence belongs to the EPSP synthase family. Monomer.

The protein resides in the cytoplasm. The enzyme catalyses 3-phosphoshikimate + phosphoenolpyruvate = 5-O-(1-carboxyvinyl)-3-phosphoshikimate + phosphate. It participates in metabolic intermediate biosynthesis; chorismate biosynthesis; chorismate from D-erythrose 4-phosphate and phosphoenolpyruvate: step 6/7. Catalyzes the transfer of the enolpyruvyl moiety of phosphoenolpyruvate (PEP) to the 5-hydroxyl of shikimate-3-phosphate (S3P) to produce enolpyruvyl shikimate-3-phosphate and inorganic phosphate. The chain is 3-phosphoshikimate 1-carboxyvinyltransferase from Afipia carboxidovorans (strain ATCC 49405 / DSM 1227 / KCTC 32145 / OM5) (Oligotropha carboxidovorans).